The sequence spans 586 residues: Lipoprotein LpqB (586 aa).

An N-terminal signal peptide occupies residues 1 to 17 (MVRSVFALVFAAVLLGG). Cys18 is lipidated: N-palmitoyl cysteine. A lipid anchor (S-diacylglycerol cysteine) is attached at Cys18. Positions 26–45 (APQAIGTVERPAPSNLPKPI) are disordered.

The protein belongs to the LpqB lipoprotein family.

It localises to the cell membrane. This Mycobacterium ulcerans (strain Agy99) protein is Lipoprotein LpqB.